A 102-amino-acid chain; its full sequence is Protein ORF28 (102 aa).

Residues 28 to 48 (VIGLITVLFLLVIGACVYCCI) traverse the membrane as a helical segment.

Its subcellular location is the host membrane. This chain is Protein ORF28 (ORF28), found in Homo sapiens (Human).